Consider the following 254-residue polypeptide: Fructose-1,6-bisphosphatase (254 aa).

4 residues coordinate Mg(2+): glutamate 68, aspartate 84, leucine 86, and aspartate 87. Substrate is bound by residues 87–89 (DGS), arginine 171, isoleucine 176, and arginine 195. Aspartate 202 contributes to the Mg(2+) binding site.

Belongs to the inositol monophosphatase superfamily. FBPase class 4 family. As to quaternary structure, homodimer. Requires Mg(2+) as cofactor.

It catalyses the reaction beta-D-fructose 1,6-bisphosphate + H2O = beta-D-fructose 6-phosphate + phosphate. With respect to regulation, inhibited by Li(+), ADP, ATP and glucose-6-phosphate. In terms of biological role, catalyzes the conversion of D-fructose 1,6-bisphosphate to D-fructose 6-phosphate. In vitro, also has weak activity with inositol-1-phosphate, glucose-1-phosphate and glycerol-2-phosphate. The polypeptide is Fructose-1,6-bisphosphatase (Pyrococcus furiosus (strain ATCC 43587 / DSM 3638 / JCM 8422 / Vc1)).